Consider the following 189-residue polypeptide: Peptidyl-tRNA hydrolase (189 aa).

Tyr-14 contacts tRNA. The active-site Proton acceptor is His-19. Positions 64, 66, and 112 each coordinate tRNA.

This sequence belongs to the PTH family. Monomer.

The protein resides in the cytoplasm. The enzyme catalyses an N-acyl-L-alpha-aminoacyl-tRNA + H2O = an N-acyl-L-amino acid + a tRNA + H(+). In terms of biological role, hydrolyzes ribosome-free peptidyl-tRNAs (with 1 or more amino acids incorporated), which drop off the ribosome during protein synthesis, or as a result of ribosome stalling. Functionally, catalyzes the release of premature peptidyl moieties from peptidyl-tRNA molecules trapped in stalled 50S ribosomal subunits, and thus maintains levels of free tRNAs and 50S ribosomes. This chain is Peptidyl-tRNA hydrolase, found in Finegoldia magna (strain ATCC 29328 / DSM 20472 / WAL 2508) (Peptostreptococcus magnus).